The following is a 278-amino-acid chain: Octanoyltransferase LipM (278 aa).

The BPL/LPL catalytic domain occupies 33–248 (KKMPPTIRFY…GFEKGLDVEL (216 aa)). The Acyl-thioester intermediate role is filled by Cys150.

It belongs to the octanoyltransferase LipM family. As to quaternary structure, monomer.

It catalyses the reaction octanoyl-[ACP] + L-lysyl-[protein] = N(6)-octanoyl-L-lysyl-[protein] + holo-[ACP] + H(+). The protein operates within protein modification; protein lipoylation via endogenous pathway; protein N(6)-(lipoyl)lysine from octanoyl-[acyl-carrier-protein]. Catalyzes the transfer of endogenously produced octanoic acid from octanoyl-acyl-carrier-protein onto the lipoyl domain of GcvH, an intermediate carrier during protein lipoylation. The protein is Octanoyltransferase LipM of Bacillus anthracis.